The primary structure comprises 216 residues: Deoxyribose-phosphate aldolase (216 aa).

Asp-89 serves as the catalytic Proton donor/acceptor. The Schiff-base intermediate with acetaldehyde role is filled by Lys-153. Lys-182 (proton donor/acceptor) is an active-site residue.

The protein belongs to the DeoC/FbaB aldolase family. DeoC type 1 subfamily.

It localises to the cytoplasm. It catalyses the reaction 2-deoxy-D-ribose 5-phosphate = D-glyceraldehyde 3-phosphate + acetaldehyde. It participates in carbohydrate degradation; 2-deoxy-D-ribose 1-phosphate degradation; D-glyceraldehyde 3-phosphate and acetaldehyde from 2-deoxy-alpha-D-ribose 1-phosphate: step 2/2. Functionally, catalyzes a reversible aldol reaction between acetaldehyde and D-glyceraldehyde 3-phosphate to generate 2-deoxy-D-ribose 5-phosphate. The sequence is that of Deoxyribose-phosphate aldolase from Treponema denticola (strain ATCC 35405 / DSM 14222 / CIP 103919 / JCM 8153 / KCTC 15104).